Consider the following 371-residue polypeptide: Putative 26S proteasome regulatory subunit homolog MJ1494 (371 aa).

G161–T168 serves as a coordination point for ATP.

Belongs to the AAA ATPase family.

Functionally, the 26S proteasome is involved in the ATP-dependent degradation of ubiquitinated proteins. The regulatory (or ATPase) complex confers ATP dependency and substrate specificity to the 26S complex. This Methanocaldococcus jannaschii (strain ATCC 43067 / DSM 2661 / JAL-1 / JCM 10045 / NBRC 100440) (Methanococcus jannaschii) protein is Putative 26S proteasome regulatory subunit homolog MJ1494.